Consider the following 249-residue polypeptide: Small ribosomal subunit protein uS5 (249 aa).

Basic and acidic residues predominate over residues 1-14; that stretch reads MSAEAPKRQFGDRR. The tract at residues 1–29 is disordered; it reads MSAEAPKRQFGDRRRGGRRGGRRDGEEKG. One can recognise an S5 DRBM domain in the interval 71–134; the sequence is LKDDVMKIRS…VIAKLSIIPI (64 aa).

Belongs to the universal ribosomal protein uS5 family. In terms of assembly, component of the small ribosomal subunit. Mature ribosomes consist of a small (40S) and a large (60S) subunit. The 40S subunit contains about 32 different proteins and 1 molecule of RNA (18S). The 60S subunit contains 45 different proteins and 3 molecules of RNA (25S, 5.8S and 5S).

Its subcellular location is the cytoplasm. Its function is as follows. Component of the ribosome, a large ribonucleoprotein complex responsible for the synthesis of proteins in the cell. The small ribosomal subunit (SSU) binds messenger RNAs (mRNAs) and translates the encoded message by selecting cognate aminoacyl-transfer RNA (tRNA) molecules. The large subunit (LSU) contains the ribosomal catalytic site termed the peptidyl transferase center (PTC), which catalyzes the formation of peptide bonds, thereby polymerizing the amino acids delivered by tRNAs into a polypeptide chain. The nascent polypeptides leave the ribosome through a tunnel in the LSU and interact with protein factors that function in enzymatic processing, targeting, and the membrane insertion of nascent chains at the exit of the ribosomal tunnel. RPS2 is important for the assembly and function of the 40S ribosomal subunitand is nvolved in nucleolar processing of pre-18S ribosomal RNA and ribosome assembly. This Candida albicans (strain SC5314 / ATCC MYA-2876) (Yeast) protein is Small ribosomal subunit protein uS5 (RPS21).